A 445-amino-acid chain; its full sequence is Bifunctional protein GlmU (445 aa).

The interval 1–218 (MRALVLAAGK…LLEITGVNTR (218 aa)) is pyrophosphorylase. Residues 6 to 9 (LAAG), Lys-20, Gln-69, 74 to 75 (GT), 96 to 98 (YGD), Gly-134, Glu-147, Asn-162, and Asn-216 contribute to the UDP-N-acetyl-alpha-D-glucosamine site. Mg(2+) is bound at residue Asp-98. Asn-216 serves as a coordination point for Mg(2+). A linker region spans residues 219–239 (KTLVWLEEQLRMRKIEELLEN). The segment at 240 to 445 (GVTILDPATT…GWVLKKRKEE (206 aa)) is N-acetyltransferase. UDP-N-acetyl-alpha-D-glucosamine-binding residues include Arg-321 and Lys-339. His-351 (proton acceptor) is an active-site residue. The UDP-N-acetyl-alpha-D-glucosamine site is built by Tyr-354 and Asn-365. Residues Ala-368, 374-375 (NY), Ser-393, Ala-411, and Arg-428 each bind acetyl-CoA.

In the N-terminal section; belongs to the N-acetylglucosamine-1-phosphate uridyltransferase family. It in the C-terminal section; belongs to the transferase hexapeptide repeat family. Homotrimer. The cofactor is Mg(2+).

It is found in the cytoplasm. It carries out the reaction alpha-D-glucosamine 1-phosphate + acetyl-CoA = N-acetyl-alpha-D-glucosamine 1-phosphate + CoA + H(+). It catalyses the reaction N-acetyl-alpha-D-glucosamine 1-phosphate + UTP + H(+) = UDP-N-acetyl-alpha-D-glucosamine + diphosphate. The protein operates within nucleotide-sugar biosynthesis; UDP-N-acetyl-alpha-D-glucosamine biosynthesis; N-acetyl-alpha-D-glucosamine 1-phosphate from alpha-D-glucosamine 6-phosphate (route II): step 2/2. It participates in nucleotide-sugar biosynthesis; UDP-N-acetyl-alpha-D-glucosamine biosynthesis; UDP-N-acetyl-alpha-D-glucosamine from N-acetyl-alpha-D-glucosamine 1-phosphate: step 1/1. It functions in the pathway bacterial outer membrane biogenesis; LPS lipid A biosynthesis. Catalyzes the last two sequential reactions in the de novo biosynthetic pathway for UDP-N-acetylglucosamine (UDP-GlcNAc). The C-terminal domain catalyzes the transfer of acetyl group from acetyl coenzyme A to glucosamine-1-phosphate (GlcN-1-P) to produce N-acetylglucosamine-1-phosphate (GlcNAc-1-P), which is converted into UDP-GlcNAc by the transfer of uridine 5-monophosphate (from uridine 5-triphosphate), a reaction catalyzed by the N-terminal domain. In Thermotoga petrophila (strain ATCC BAA-488 / DSM 13995 / JCM 10881 / RKU-1), this protein is Bifunctional protein GlmU.